A 659-amino-acid polypeptide reads, in one-letter code: RNA polymerase II subunit A C-terminal domain phosphatase (659 aa).

The region spanning 139 to 303 is the FCP1 homology domain; sequence ITNRKLVLLV…KNSKEQMPVQ (165 aa). Residues 351–443 form the BRCT domain; the sequence is ERHKVLDGCV…LKADENLFQL (93 aa). Acidic residues predominate over residues 484–504; the sequence is ALSDDEDDGDNEDEDDDGNDV. The disordered stretch occupies residues 484–640; it reads ALSDDEDDGD…PESDDDDEFE (157 aa). Over residues 505–519 the composition is skewed to basic and acidic residues; sequence GEDKGDENLEEKQEK. Residues 529–538 are compositionally biased toward polar residues; sequence QNGSVENQSG. Acidic residues-rich tracts occupy residues 560-576, 596-607, and 616-640; these read MEDE…DDDT, ENEDDAVFDVDD, and IDEE…DEFE.

It is found in the nucleus. It carries out the reaction O-phospho-L-seryl-[protein] + H2O = L-seryl-[protein] + phosphate. The enzyme catalyses O-phospho-L-threonyl-[protein] + H2O = L-threonyl-[protein] + phosphate. Its function is as follows. During the late stages of oogenesis, dephosphorylates 'Ser-5' of the heptad repeats YSPTSPS in the C-terminal domain of the largest RNA polymerase II subunit ama-1. Similarly, dephosphorylates 'Ser-5' of ama-1 in early embryonic cells prior to the activation of the zygotic transcription program at the 4-cell embryonic stage. May dephosphorylate 'Ser-2' of the ama-1 heptad repeats YSPTSPS in embryonic somatic and germline cells. The sequence is that of RNA polymerase II subunit A C-terminal domain phosphatase from Caenorhabditis elegans.